The chain runs to 124 residues: Fluoride-specific ion channel FluC (124 aa).

Helical transmembrane passes span 4–24 (IVLL…LAGL), 35–55 (LGTF…WGVC), 67–87 (VVLL…TFES), and 96–116 (WLAF…LLWL). Na(+) contacts are provided by Gly75 and Thr78.

This sequence belongs to the fluoride channel Fluc/FEX (TC 1.A.43) family.

Its subcellular location is the cell inner membrane. It carries out the reaction fluoride(in) = fluoride(out). Na(+) is not transported, but it plays an essential structural role and its presence is essential for fluoride channel function. In terms of biological role, fluoride-specific ion channel. Important for reducing fluoride concentration in the cell, thus reducing its toxicity. This is Fluoride-specific ion channel FluC from Nitratidesulfovibrio vulgaris (strain DSM 19637 / Miyazaki F) (Desulfovibrio vulgaris).